Here is a 66-residue protein sequence, read N- to C-terminus: VILLMSTQALIQSGVEKRSNKIKALSKRKTTAESWWEGECYGWWTSCSSPEQCCSLNCENIYCRAW.

The N-terminal stretch at 1–9 (VILLMSTQA) is a signal peptide. The propeptide occupies 10 to 38 (LIQSGVEKRSNKIKALSKRKTTAESWWEG). 3 cysteine pairs are disulfide-bonded: Cys-40-Cys-54, Cys-47-Cys-58, and Cys-53-Cys-63.

It belongs to the conotoxin O2 superfamily. In terms of tissue distribution, expressed by the venom duct.

The protein resides in the secreted. In Conus tessulatus (Tessellate cone), this protein is Conotoxin TsMEKL-03.